The primary structure comprises 435 residues: Palmitoyltransferase pfa4 (435 aa).

Residues 1–10 (MLCSSFSVSR) lie on the Cytoplasmic side of the membrane. The chain crosses the membrane as a helical span at residues 11–31 (LAIPAVCILIAFLAYTSQIFF). Over 32-48 (LYFEDAPLKEDEVWRIN) the chain is Lumenal. Residues 49–69 (ILAICIWICYYRACTVDPGHV) traverse the membrane as a helical segment. Topologically, residues 70-129 (PKGWMPSDRERLKADRASGRQRWCRRCEAYKPPRAHHCKTCERCVPKMDHHCPWTSNCVS) are cytoplasmic. Residues 91-141 (RWCRRCEAYKPPRAHHCKTCERCVPKMDHHCPWTSNCVSHFTFPHFARFLF) form the DHHC domain. Catalysis depends on cysteine 121, which acts as the S-palmitoyl cysteine intermediate. Residues 130–150 (HFTFPHFARFLFYAVVGIAYL) traverse the membrane as a helical segment. Over 151–179 (ETRLWQRVSKVWGSRHLPSYLGPSMGQIG) the chain is Lumenal. The chain crosses the membrane as a helical span at residues 180–200 (HLFVLFVTNSLTLFALSLLLL). The Cytoplasmic segment spans residues 201–435 (RTLWSLGSNT…QRAKRQHLSQ (235 aa)). Positions 359–368 (RKPFHVRLEE) are enriched in basic and acidic residues. The segment at 359–408 (RKPFHVRLEEYSNGSSDAEADTGSDDDSDHGEEGWKNSEGERLRDFGVDE) is disordered. Positions 376–388 (AEADTGSDDDSDH) are enriched in acidic residues. A compositionally biased stretch (basic and acidic residues) spans 389 to 405 (GEEGWKNSEGERLRDFG).

It belongs to the DHHC palmitoyltransferase family. PFA4 subfamily.

It localises to the endoplasmic reticulum membrane. It catalyses the reaction L-cysteinyl-[protein] + hexadecanoyl-CoA = S-hexadecanoyl-L-cysteinyl-[protein] + CoA. In terms of biological role, mediates the reversible addition of palmitate to target proteins, thereby regulating their membrane association and biological function. This Emericella nidulans (strain FGSC A4 / ATCC 38163 / CBS 112.46 / NRRL 194 / M139) (Aspergillus nidulans) protein is Palmitoyltransferase pfa4.